We begin with the raw amino-acid sequence, 250 residues long: CCN family member 5 (250 aa).

The signal sequence occupies residues 1 to 23 (MRGSPLIRLLATSFLCLLSMVCA). 6 disulfide bridges follow: Cys22-Cys50, Cys26-Cys52, Cys32-Cys53, Cys39-Cys56, Cys64-Cys78, and Cys70-Cys100. Positions 24–103 (QLCRTPCTCP…DEDDGDCEVN (80 aa)) constitute an IGFBP N-terminal domain. Residues 98–164 (GDCEVNGRRY…GKCCPEWVCD (67 aa)) form the VWFC domain. One can recognise a TSP type-1 domain in the interval 194 to 238 (WPNWSTAWGPCSTTCGLGIATRVSNQNRFCQLEIQRRLCLPRPCL). Residue Asn196 is glycosylated (N-linked (GlcNAc...) asparagine).

Belongs to the CCN family.

It localises to the secreted. In terms of biological role, may play an important role in modulating bone turnover. Promotes the adhesion of osteoblast cells and inhibits the binding of fibrinogen to integrin receptors. In addition, inhibits osteocalcin production. This chain is CCN family member 5 (Ccn5), found in Rattus norvegicus (Rat).